Consider the following 115-residue polypeptide: Large ribosomal subunit protein bL31B (115 aa).

The protein belongs to the bacterial ribosomal protein bL31 family. Type B subfamily. In terms of assembly, part of the 50S ribosomal subunit.

In Polynucleobacter necessarius subsp. necessarius (strain STIR1), this protein is Large ribosomal subunit protein bL31B.